Consider the following 124-residue polypeptide: Max-like protein 1 (124 aa).

Residues M1–D10 show a composition bias toward acidic residues. A disordered region spans residues M1–N44. Residues H29–R42 form a basic motif region. In terms of domain architecture, bHLH spans H29–G82. Basic and acidic residues predominate over residues E32–N44. Residues D43–G82 are helix-loop-helix motif. A coiled-coil region spans residues S86 to K113.

This sequence belongs to the MAX family. In terms of assembly, heterodimer with mdl-1 in presence and absence of DNA. Interacts with tdpt-1; the interaction promotes axon regeneration after injury. In terms of tissue distribution, expressed in D-type motor neurons.

It is found in the nucleus. Transcriptional regulator which binds to the E box motif 5'-CACGTG-3', when in a heterodimeric complex with mdl-1. Involved in the control of lifespan in response to dietary restriction, the decline in protein homeostasis associated with normal aging and may overlap with the insulin-like signaling pathway. Involved in promoting infection by the microsporidian pathogen N.parisii. Required for the expression of svh-2 and the promotion of axon regeneration after injury. The protein is Max-like protein 1 of Caenorhabditis elegans.